Here is a 536-residue protein sequence, read N- to C-terminus: MEQLGTRNPSNGLETIGFSDLSVVRYNFEAAELYEEALRRGEAQLTAHGALCARTGQHTGRSPKDKYVVRDAATGDQIWWDNNSAISPENFERLRQDMLAHAKGMSLYVQDLVGGADQENALPTRVVTEFAWHSLFIRNLLIRPPREALASFLPKLTIIDLPSFKANPERHGCRGETIIACDLTKGLVLIGGTSYAGEMKKSVFTVLNYLLPNKAVMPMHCSANVGPAGDTAIFFGLSGTGKTTLSADPNRTLIGDDEHGWSDKGVFNFEGGCYAKAIRLSEAAEPEIFATTRRFGTVMENVVLDERRAPDFDNGSLTENTRIAYPLDFIPNASETGTAPQPRTIIMLTADAFGVLPPIAKLTPEQAMYHFLSGYTAKVAGTEKGVTEPEATFSTCFGAPFMPRHPSEYGNLLKDLIARNGVTCWLVNTGWTGGAYGTGSRMPIKVTRALLSAALDGSLNSAAFRTDANFGFAVPVSVPGVDDRILDPRSTWSDGQAYDAQARRLVDMFIANFAKFESHVDGSVRDAAPGTKLAAE.

Substrate is bound by residues R61, Y195, and K201. ATP is bound by residues K201, H220, and 236–244 (GLSGTGKTT). 2 residues coordinate Mn(2+): K201 and H220. D257 lines the Mn(2+) pocket. The ATP site is built by E285, R322, and T447. R322 is a binding site for substrate.

The protein belongs to the phosphoenolpyruvate carboxykinase (ATP) family. The cofactor is Mn(2+).

It localises to the cytoplasm. The catalysed reaction is oxaloacetate + ATP = phosphoenolpyruvate + ADP + CO2. It participates in carbohydrate biosynthesis; gluconeogenesis. In terms of biological role, involved in the gluconeogenesis. Catalyzes the conversion of oxaloacetate (OAA) to phosphoenolpyruvate (PEP) through direct phosphoryl transfer between the nucleoside triphosphate and OAA. The sequence is that of Phosphoenolpyruvate carboxykinase (ATP) from Sinorhizobium fredii (strain NBRC 101917 / NGR234).